The chain runs to 95 residues: ATP-dependent Clp protease adapter protein ClpS (95 aa).

This sequence belongs to the ClpS family. In terms of assembly, binds to the N-terminal domain of the chaperone ClpA.

In terms of biological role, involved in the modulation of the specificity of the ClpAP-mediated ATP-dependent protein degradation. The sequence is that of ATP-dependent Clp protease adapter protein ClpS from Synechococcus elongatus (strain ATCC 33912 / PCC 7942 / FACHB-805) (Anacystis nidulans R2).